We begin with the raw amino-acid sequence, 300 residues long: Tyrosine recombinase XerC (300 aa).

Residues 1–86 form the Core-binding (CB) domain; that stretch reads MESVLDAFDQ…AVKTFTAWAV (86 aa). A Tyr recombinase domain is found at 107 to 294; the sequence is TLPAVLRQDQ…TVARLRAVHD (188 aa). Catalysis depends on residues Arg151, Lys175, His246, Arg249, and His272. Tyr281 serves as the catalytic O-(3'-phospho-DNA)-tyrosine intermediate.

It belongs to the 'phage' integrase family. XerC subfamily. Forms a cyclic heterotetrameric complex composed of two molecules of XerC and two molecules of XerD.

It localises to the cytoplasm. Site-specific tyrosine recombinase, which acts by catalyzing the cutting and rejoining of the recombining DNA molecules. The XerC-XerD complex is essential to convert dimers of the bacterial chromosome into monomers to permit their segregation at cell division. It also contributes to the segregational stability of plasmids. The chain is Tyrosine recombinase XerC from Mycobacterium sp. (strain KMS).